The chain runs to 428 residues: Histone deacetylase 3 (428 aa).

Residues 3–316 form a histone deacetylase region; that stretch reads KTVAYFYDPD…WTYETSLLVD (314 aa). His-17, Gly-21, and Lys-25 together coordinate 1D-myo-inositol 1,4,5,6-tetrakisphosphate. The active site involves His-135. Residues Asp-170, His-172, and Asp-259 each coordinate Zn(2+). 1D-myo-inositol 1,4,5,6-tetrakisphosphate is bound at residue Arg-265. The tract at residues 385 to 428 is disordered; the sequence is LSYDRTDEPDPEERGSEENYSRPEAANEFYDGDHDNDKESDVEI. 2 stretches are compositionally biased toward basic and acidic residues: residues 386–405 and 415–428; these read SYDRTDEPDPEERGSEENYS and DGDHDNDKESDVEI.

This sequence belongs to the histone deacetylase family. HD type 1 subfamily.

It localises to the nucleus. The protein resides in the chromosome. It is found in the cytoplasm. The protein localises to the cytosol. The enzyme catalyses N(6)-acetyl-L-lysyl-[histone] + H2O = L-lysyl-[histone] + acetate. The catalysed reaction is N(6)-acetyl-L-lysyl-[protein] + H2O = L-lysyl-[protein] + acetate. It catalyses the reaction N(6)-(2E)-butenoyl-L-lysyl-[protein] + H2O = (2E)-2-butenoate + L-lysyl-[protein]. It carries out the reaction N(6)-(2-hydroxyisobutanoyl)-L-lysyl-[protein] + H2O = 2-hydroxy-2-methylpropanoate + L-lysyl-[protein]. The enzyme catalyses N(6)-[(S)-lactoyl]-L-lysyl-[protein] + H2O = (S)-lactate + L-lysyl-[protein]. Its activity is regulated as follows. Inositol tetraphosphate (1D-myo-inositol 1,4,5,6-tetrakisphosphate) promotes the histone deacetylase activity by acting as an intermolecular glue between HDAC3 and N-Cor repressor complex components. Its function is as follows. Histone deacetylase that catalyzes the deacetylation of lysine residues on the N-terminal part of the core histones (H2A, H2B, H3 and H4), and some other non-histone substrates. Histone deacetylation gives a tag for epigenetic repression and plays an important role in transcriptional regulation, cell cycle progression and developmental events. Histone deacetylases act via the formation of large multiprotein complexes, such as N-Cor repressor complex, which activate the histone deacetylase activity. Participates in the BCL6 transcriptional repressor activity by deacetylating the H3 'Lys-27' (H3K27) on enhancer elements, antagonizing EP300 acetyltransferase activity and repressing proximal gene expression. Also functions as a deacetylase for non-histone targets. In addition to protein deacetylase activity, also acts as a protein-lysine deacylase by recognizing other acyl groups: catalyzes removal of (2E)-butenoyl (crotonyl), lactoyl (lactyl) and 2-hydroxyisobutanoyl (2-hydroxyisobutyryl) acyl groups from lysine residues, leading to protein decrotonylation, delactylation and de-2-hydroxyisobutyrylation, respectively. The polypeptide is Histone deacetylase 3 (HDAC3) (Gallus gallus (Chicken)).